The chain runs to 262 residues: E3 ubiquitin-protein ligase NEURL3 (262 aa).

In terms of domain architecture, NHR spans 17-173; the sequence is ALRFHAEAKG…TTKAIELLDP (157 aa). The segment at 202-241 adopts an RING-type zinc-finger fold; that stretch reads CAICFYHAANTRLVPCGHTYFCRYCAWRVFSDTAKCPVCR.

(Microbial infection) Interacts with hepatitis C virus protein E1; this interaction prevents E1 interaction with E2 and subsequently inhibits viral infection.

The protein localises to the cytoplasm. The catalysed reaction is S-ubiquitinyl-[E2 ubiquitin-conjugating enzyme]-L-cysteine + [acceptor protein]-L-lysine = [E2 ubiquitin-conjugating enzyme]-L-cysteine + N(6)-ubiquitinyl-[acceptor protein]-L-lysine.. Its pathway is protein modification; protein ubiquitination. Functionally, E3 ubiquitin-protein ligase that plays a role in various biological processes such as lung development or innate immunity. Seems to utilize UBE2E1. Promotes innate antiviral response by catalyzing 'Lys-63'-linked ubiquitination of IRF7. Also inhibits hepatitis C virus assembly by directly binding to viral E1 envelope glycoprotein to disrupt its interaction with E2. Plays an essential role in TLR4-mediated activation of MAPK pathways by promoting 'Lys-48'-linked polyubiquitination of the phosphatase DUSP1/MKP1. This is E3 ubiquitin-protein ligase NEURL3 (NEURL3) from Homo sapiens (Human).